Consider the following 314-residue polypeptide: Methionyl-tRNA formyltransferase (314 aa).

Position 109–112 (109–112) interacts with (6S)-5,6,7,8-tetrahydrofolate; sequence SLLP.

The protein belongs to the Fmt family.

The enzyme catalyses L-methionyl-tRNA(fMet) + (6R)-10-formyltetrahydrofolate = N-formyl-L-methionyl-tRNA(fMet) + (6S)-5,6,7,8-tetrahydrofolate + H(+). Functionally, attaches a formyl group to the free amino group of methionyl-tRNA(fMet). The formyl group appears to play a dual role in the initiator identity of N-formylmethionyl-tRNA by promoting its recognition by IF2 and preventing the misappropriation of this tRNA by the elongation apparatus. This chain is Methionyl-tRNA formyltransferase, found in Alkaliphilus metalliredigens (strain QYMF).